Reading from the N-terminus, the 421-residue chain is E3 ubiquitin-protein ligase MARCHF4 (421 aa).

A signal peptide spans 1–16 (MLLAIGVIVWCWGLLS). The segment at 60–79 (ELNAEGNATSSATESHSLAN) is disordered. The segment covering 65–77 (GNATSSATESHSL) has biased composition (polar residues). The RING-CH-type zinc-finger motif lies at 135–195 (DSGVRTPLCR…ELCYYKYQVI (61 aa)). Residues cysteine 143, cysteine 146, cysteine 159, cysteine 161, histidine 169, cysteine 172, cysteine 185, and cysteine 188 each contribute to the Zn(2+) site. Transmembrane regions (helical) follow at residues 218–238 (IAAA…LVWS) and 252–272 (LFQI…ALIV). 2 disordered regions span residues 319 to 385 (PLTH…LPDH) and 401 to 421 (QEPR…VTTV). 2 stretches are compositionally biased toward polar residues: residues 367-380 (TEPQ…NGQP) and 403-412 (PRGQTSNSNR).

The protein localises to the golgi apparatus membrane. It carries out the reaction S-ubiquitinyl-[E2 ubiquitin-conjugating enzyme]-L-cysteine + [acceptor protein]-L-lysine = [E2 ubiquitin-conjugating enzyme]-L-cysteine + N(6)-ubiquitinyl-[acceptor protein]-L-lysine.. The protein operates within protein modification; protein ubiquitination. Its function is as follows. E3 ubiquitin-protein ligase. E3 ubiquitin ligases accept ubiquitin from an E2 ubiquitin-conjugating enzyme in the form of a thioester and then directly transfer the ubiquitin to targeted substrates. This chain is E3 ubiquitin-protein ligase MARCHF4 (marchf4), found in Danio rerio (Zebrafish).